The chain runs to 191 residues: Ribosome maturation factor RimM (191 aa).

In terms of domain architecture, PRC barrel spans 102 to 185; the sequence is EEEYHVSQLI…RIEINPPKGL (84 aa).

It belongs to the RimM family. In terms of assembly, binds ribosomal protein uS19.

The protein resides in the cytoplasm. Functionally, an accessory protein needed during the final step in the assembly of 30S ribosomal subunit, possibly for assembly of the head region. Essential for efficient processing of 16S rRNA. May be needed both before and after RbfA during the maturation of 16S rRNA. It has affinity for free ribosomal 30S subunits but not for 70S ribosomes. This chain is Ribosome maturation factor RimM, found in Crocosphaera subtropica (strain ATCC 51142 / BH68) (Cyanothece sp. (strain ATCC 51142)).